Reading from the N-terminus, the 232-residue chain is 5'-methylthioadenosine/S-adenosylhomocysteine nucleosidase (232 aa).

Glu-12 (proton acceptor) is an active-site residue. Residues Gly-78, Ile-152, and 173–174 contribute to the substrate site; that span reads ME. Catalysis depends on Asp-197, which acts as the Proton donor.

The protein belongs to the PNP/UDP phosphorylase family. MtnN subfamily. In terms of assembly, homodimer.

The catalysed reaction is S-adenosyl-L-homocysteine + H2O = S-(5-deoxy-D-ribos-5-yl)-L-homocysteine + adenine. The enzyme catalyses S-methyl-5'-thioadenosine + H2O = 5-(methylsulfanyl)-D-ribose + adenine. It catalyses the reaction 5'-deoxyadenosine + H2O = 5-deoxy-D-ribose + adenine. Its pathway is amino-acid biosynthesis; L-methionine biosynthesis via salvage pathway; S-methyl-5-thio-alpha-D-ribose 1-phosphate from S-methyl-5'-thioadenosine (hydrolase route): step 1/2. Catalyzes the irreversible cleavage of the glycosidic bond in both 5'-methylthioadenosine (MTA) and S-adenosylhomocysteine (SAH/AdoHcy) to adenine and the corresponding thioribose, 5'-methylthioribose and S-ribosylhomocysteine, respectively. Also cleaves 5'-deoxyadenosine, a toxic by-product of radical S-adenosylmethionine (SAM) enzymes, into 5-deoxyribose and adenine. Thus, is required for in vivo function of the radical SAM enzymes biotin synthase and lipoic acid synthase, that are inhibited by 5'-deoxyadenosine accumulation. This chain is 5'-methylthioadenosine/S-adenosylhomocysteine nucleosidase, found in Salmonella paratyphi A (strain ATCC 9150 / SARB42).